Here is a 611-residue protein sequence, read N- to C-terminus: Threonine--tRNA ligase (611 aa).

A catalytic region spans residues 211–509; the sequence is DHRKLGTELE…LTEHYAGEFP (299 aa). 3 residues coordinate Zn(2+): cysteine 310, histidine 361, and histidine 486.

This sequence belongs to the class-II aminoacyl-tRNA synthetase family. In terms of assembly, homodimer. Zn(2+) serves as cofactor.

The protein localises to the cytoplasm. It catalyses the reaction tRNA(Thr) + L-threonine + ATP = L-threonyl-tRNA(Thr) + AMP + diphosphate + H(+). Its function is as follows. Catalyzes the attachment of threonine to tRNA(Thr) in a two-step reaction: L-threonine is first activated by ATP to form Thr-AMP and then transferred to the acceptor end of tRNA(Thr). Also edits incorrectly charged L-seryl-tRNA(Thr). This chain is Threonine--tRNA ligase, found in Nautilia profundicola (strain ATCC BAA-1463 / DSM 18972 / AmH).